A 589-amino-acid chain; its full sequence is MVSLQVSSLPQTLILAFLLPQALPAGVFELQIHSFGPGPGPGTPRSPCNARGPCRLFFRVCLKPGVSQEAAESLCALGAALSTSGPVYTEQPGVPAAALSLPDGLVRVPFLDAWPGTFSLIIETWREQLGERAAGPAWNLLARVAGRRRLAAGAPWARDVQRTGAWELHFSYRARCEPPAVGAACARLCRSRSAPSRCGPGLRPCTPFPDECEAPRESLTVCRAGCSPEHGYCEEPDECHCLEGWTGPLCTVPVSTSSCLNSRVSGPAGTGCLLPGPGPCDGNPCANGGSCSETPGSFECACPRGFYGPRCEVSGVTCADGPCFNGGLCVGGEDPDSAYVCHCPPAFQGSNCERRVDRCSLQPCQNGGLCLDLGHALRCRCRAGFAGPRCEHDLDDCAGRACANGGTCVEGGGARRCSCALGFGGRDCRERADPCASRPCAHGGRCYAHFSGLVCACAPGYMGVRCEFAVRPDGADAVPAAPRGLRQADSQRFLLPPALGLLAAAALAGAALLLIHVRRRGPGRDTGTRLLSGTREPSVHTLPDALNNLRLQDGAGDGPTSSADWNHPEDGDSRSIYVIPAPSIYAREA.

The first 32 residues, 1-32 (MVSLQVSSLPQTLILAFLLPQALPAGVFELQI), serve as a signal peptide directing secretion. Topologically, residues 33 to 494 (HSFGPGPGPG…LRQADSQRFL (462 aa)) are extracellular. Positions 174–213 (ARCEPPAVGAACARLCRSRSAPSRCGPGLRPCTPFPDECE) constitute a DSL domain. EGF-like domains follow at residues 218–251 (SLTV…PLCT), 276–312 (GPGP…PRCE), 314–353 (SGVT…SNCE), 355–391 (RVDR…PRCE), 393–429 (DLDD…RDCR), and 431–467 (RADP…VRCE). Disulfide bonds link Cys222–Cys233, Cys226–Cys239, Cys241–Cys250, Cys280–Cys291, Cys285–Cys300, Cys302–Cys311, Cys318–Cys329, Cys323–Cys341, Cys343–Cys352, Cys359–Cys370, Cys364–Cys379, Cys381–Cys390, Cys397–Cys408, Cys402–Cys417, Cys419–Cys428, Cys435–Cys446, Cys440–Cys455, and Cys457–Cys466. Residues 495–515 (LPPALGLLAAAALAGAALLLI) traverse the membrane as a helical segment. The Cytoplasmic segment spans residues 516–589 (HVRRRGPGRD…PAPSIYAREA (74 aa)). The interval 552 to 574 (QDGAGDGPTSSADWNHPEDGDSR) is disordered.

As to quaternary structure, can bind and activate Notch-1 or another Notch receptor. Post-translationally, ubiquitinated by MIB (MIB1 or MIB2), leading to its endocytosis and subsequent degradation.

It is found in the membrane. Its function is as follows. Inhibits primary neurogenesis. May be required to divert neurons along a specific differentiation pathway. Plays a role in the formation of somite boundaries during segmentation of the paraxial mesoderm. This chain is Delta-like protein 3 (Dll3), found in Rattus norvegicus (Rat).